The following is a 275-amino-acid chain: tRNA pseudouridine synthase A (275 aa).

D56 acts as the Nucleophile in catalysis. Y114 serves as a coordination point for substrate.

Belongs to the tRNA pseudouridine synthase TruA family. As to quaternary structure, homodimer.

The enzyme catalyses uridine(38/39/40) in tRNA = pseudouridine(38/39/40) in tRNA. Formation of pseudouridine at positions 38, 39 and 40 in the anticodon stem and loop of transfer RNAs. The protein is tRNA pseudouridine synthase A of Polynucleobacter asymbioticus (strain DSM 18221 / CIP 109841 / QLW-P1DMWA-1) (Polynucleobacter necessarius subsp. asymbioticus).